Reading from the N-terminus, the 23-residue chain is Lycosin-II (23 aa).

A Leucine amide modification is found at Leu21.

In terms of tissue distribution, expressed by the venom gland.

It localises to the secreted. Its subcellular location is the target cell membrane. Its function is as follows. Has strong antibacterial activity and biofilm inhibition effects against Gram-positive and -negative bacteria including E.coli, S.epidermidis, and A.baumannii and oxacillin-resistant S.aureus and meropenem-resistant P.aeruginosa. Is not cytotoxic against human foreskin fibroblast Hs27 or hemolytic against mammalian red blood cells. Its mechanism of action involves binding to lipoteichoic acid and lipopolysaccharide of Gram-positive and Gram-negative bacterial membranes, respectively, to destroy the bacterial membrane. In addition, it shows anti-inflammatory effects by inhibiting the expression of pro-inflammatory cytokines that are increased during bacterial infection in Hs27 cells. The sequence is that of Lycosin-II from Lycosa singoriensis (Wolf spider).